We begin with the raw amino-acid sequence, 259 residues long: DNA repair protein RecO (259 aa).

Belongs to the RecO family.

Functionally, involved in DNA repair and RecF pathway recombination. This is DNA repair protein RecO from Rhizobium rhizogenes (strain K84 / ATCC BAA-868) (Agrobacterium radiobacter).